A 259-amino-acid polypeptide reads, in one-letter code: Deoxyribose-phosphate aldolase (259 aa).

D101 serves as the catalytic Proton donor/acceptor. The active-site Schiff-base intermediate with acetaldehyde is K166. K200 functions as the Proton donor/acceptor in the catalytic mechanism.

Belongs to the DeoC/FbaB aldolase family. DeoC type 2 subfamily.

The protein resides in the cytoplasm. The catalysed reaction is 2-deoxy-D-ribose 5-phosphate = D-glyceraldehyde 3-phosphate + acetaldehyde. It functions in the pathway carbohydrate degradation; 2-deoxy-D-ribose 1-phosphate degradation; D-glyceraldehyde 3-phosphate and acetaldehyde from 2-deoxy-alpha-D-ribose 1-phosphate: step 2/2. Catalyzes a reversible aldol reaction between acetaldehyde and D-glyceraldehyde 3-phosphate to generate 2-deoxy-D-ribose 5-phosphate. The chain is Deoxyribose-phosphate aldolase from Glaesserella parasuis serovar 5 (strain SH0165) (Haemophilus parasuis).